The chain runs to 677 residues: UvrABC system protein B (677 aa).

Residues 24–412 (EGVLEGVPAQ…EGIVVEQVIR (389 aa)) enclose the Helicase ATP-binding domain. 37 to 44 (GVTGSGKT) serves as a coordination point for ATP. The short motif at 90–113 (YYDYYQPEAYLPSSDTYIEKDLAI) is the Beta-hairpin element. Residues 429-591 (QIDDLMEEIQ…ITPQQIKKAR (163 aa)) enclose the Helicase C-terminal domain. Residues 635–670 (EKSMERTRKLMQEAAKKLEFIEAAQYRDELLKMEDL) form the UVR domain.

It belongs to the UvrB family. In terms of assembly, forms a heterotetramer with UvrA during the search for lesions. Interacts with UvrC in an incision complex.

The protein localises to the cytoplasm. In terms of biological role, the UvrABC repair system catalyzes the recognition and processing of DNA lesions. A damage recognition complex composed of 2 UvrA and 2 UvrB subunits scans DNA for abnormalities. Upon binding of the UvrA(2)B(2) complex to a putative damaged site, the DNA wraps around one UvrB monomer. DNA wrap is dependent on ATP binding by UvrB and probably causes local melting of the DNA helix, facilitating insertion of UvrB beta-hairpin between the DNA strands. Then UvrB probes one DNA strand for the presence of a lesion. If a lesion is found the UvrA subunits dissociate and the UvrB-DNA preincision complex is formed. This complex is subsequently bound by UvrC and the second UvrB is released. If no lesion is found, the DNA wraps around the other UvrB subunit that will check the other stand for damage. The chain is UvrABC system protein B from Bacteroides fragilis (strain YCH46).